The chain runs to 325 residues: Tetraacyldisaccharide 4'-kinase (325 aa).

55 to 62 (TAGGNGKT) is a binding site for ATP.

This sequence belongs to the LpxK family.

It catalyses the reaction a lipid A disaccharide + ATP = a lipid IVA + ADP + H(+). Its pathway is glycolipid biosynthesis; lipid IV(A) biosynthesis; lipid IV(A) from (3R)-3-hydroxytetradecanoyl-[acyl-carrier-protein] and UDP-N-acetyl-alpha-D-glucosamine: step 6/6. Functionally, transfers the gamma-phosphate of ATP to the 4'-position of a tetraacyldisaccharide 1-phosphate intermediate (termed DS-1-P) to form tetraacyldisaccharide 1,4'-bis-phosphate (lipid IVA). The polypeptide is Tetraacyldisaccharide 4'-kinase (Salmonella dublin (strain CT_02021853)).